The following is a 551-amino-acid chain: ATPase expression protein 2, mitochondrial (551 aa).

A disordered region spans residues 530 to 551 (AQKAQKRFDDEEEDSMLLGRLW).

Belongs to the AEP2 family. Binds to the 5'UTR of the OLI1 mRNA.

The protein resides in the mitochondrion. Its function is as follows. Required for translation of the mitochondrial OLI1 transcript coding for the mitochondrial ATP synthase subunit 9. The sequence is that of ATPase expression protein 2, mitochondrial (AEP2) from Lachancea thermotolerans (strain ATCC 56472 / CBS 6340 / NRRL Y-8284) (Yeast).